Consider the following 745-residue polypeptide: Pentatricopeptide repeat-containing protein At1g71420 (745 aa).

PPR repeat units follow at residues 58–88 (SQQAYAALFQACAEQRNLLDGINLHHHMLSH), 95–125 (NVILANFLINMYAKCGNILYARQVFDTMPER), 126–160 (NVVSWTALITGYVQAGNEQEGFCLFSSMLSHCFPN), 191–224 (SIYVANAVISMYGRCHDGAAAYEAWTVFEAIKFK), 225–259 (NLVTWNSMIAAFQCCNLGKKAIGVFMRMHSDGVGF), 260–296 (DRATLLNICSSLYKSSDLVPNEVSKCCLQLHSLTVKS), 301–332 (QTEVATALIKVYSEMLEDYTDCYKLFMEMSHC), 334–367 (DIVAWNGIITAFAVYDPERAIHLFGQLRQEKLSP), 368–402 (DWYTFSSVLKACAGLVTARHALSIHAQVIKGGFLA), 403–437 (DTVLNNSLIHAYAKCGSLDLCMRVFDDMDSRDVVS), 438–464 (WNSMLKAYSLHGQVDSILPVFQKMDIN), 466–496 (DSATFIALLSACSHAGRVEEGLRIFRSMFEK), and 502–532 (QLNHYACVIDMLSRAERFAEAEEVIKQMPMD). The interval 537–613 (VWIALLGSCR…EPDLSWTEIG (77 aa)) is type E motif. A type E(+) motif region spans residues 614-644 (NKVHEFASGGRHRPDKEAVYRELKRLISWLK). Residues 645 to 745 (EMGYVPEMRS…DSSCSCNDYW (101 aa)) are type DYW motif.

It belongs to the PPR family. PCMP-H subfamily.

This Arabidopsis thaliana (Mouse-ear cress) protein is Pentatricopeptide repeat-containing protein At1g71420 (PCMP-H70).